Consider the following 155-residue polypeptide: Protein-export protein SecB (155 aa).

It belongs to the SecB family. In terms of assembly, homotetramer, a dimer of dimers. One homotetramer interacts with 1 SecA dimer.

The protein resides in the cytoplasm. In terms of biological role, one of the proteins required for the normal export of preproteins out of the cell cytoplasm. It is a molecular chaperone that binds to a subset of precursor proteins, maintaining them in a translocation-competent state. It also specifically binds to its receptor SecA. The protein is Protein-export protein SecB of Paramagnetospirillum magneticum (strain ATCC 700264 / AMB-1) (Magnetospirillum magneticum).